The chain runs to 387 residues: Phosphoglycerate kinase (387 aa).

Residues 21–23 (DLN), R36, 59–62 (HLGR), R113, and R146 contribute to the substrate site. Residues K197, E314, and 340–343 (GGDT) contribute to the ATP site.

It belongs to the phosphoglycerate kinase family. As to quaternary structure, monomer.

The protein localises to the cytoplasm. The catalysed reaction is (2R)-3-phosphoglycerate + ATP = (2R)-3-phospho-glyceroyl phosphate + ADP. Its pathway is carbohydrate degradation; glycolysis; pyruvate from D-glyceraldehyde 3-phosphate: step 2/5. The polypeptide is Phosphoglycerate kinase (Pectobacterium carotovorum subsp. carotovorum (strain PC1)).